Here is a 187-residue protein sequence, read N- to C-terminus: TATA-box-binding protein (187 aa).

2 consecutive repeat copies span residues 10–86 (IENV…FDKL) and 101–179 (VQNI…VSRL).

It belongs to the TBP family.

In terms of biological role, general factor that plays a role in the activation of archaeal genes transcribed by RNA polymerase. Binds specifically to the TATA box promoter element which lies close to the position of transcription initiation. This chain is TATA-box-binding protein, found in Natronomonas pharaonis (strain ATCC 35678 / DSM 2160 / CIP 103997 / JCM 8858 / NBRC 14720 / NCIMB 2260 / Gabara) (Halobacterium pharaonis).